The following is a 257-amino-acid chain: Glutamate racemase (257 aa).

Substrate-binding positions include 12–13 (DS) and 44–45 (YG). Residue C75 is the Proton donor/acceptor of the active site. 76–77 (NT) lines the substrate pocket. The Proton donor/acceptor role is filled by C176. A substrate-binding site is contributed by 177–178 (TH).

Belongs to the aspartate/glutamate racemases family.

It carries out the reaction L-glutamate = D-glutamate. Its pathway is cell wall biogenesis; peptidoglycan biosynthesis. Its function is as follows. Provides the (R)-glutamate required for cell wall biosynthesis. The protein is Glutamate racemase of Thermus thermophilus (strain ATCC BAA-163 / DSM 7039 / HB27).